The following is a 320-amino-acid chain: Ferrochelatase (320 aa).

The Fe cation site is built by H194 and E275.

Belongs to the ferrochelatase family.

Its subcellular location is the cytoplasm. It catalyses the reaction heme b + 2 H(+) = protoporphyrin IX + Fe(2+). Its pathway is porphyrin-containing compound metabolism; protoheme biosynthesis; protoheme from protoporphyrin-IX: step 1/1. Its function is as follows. Catalyzes the ferrous insertion into protoporphyrin IX. This is Ferrochelatase from Enterobacter sp. (strain 638).